The sequence spans 290 residues: HTH-type transcriptional regulator BsdA (290 aa).

In terms of domain architecture, HTH lysR-type spans Met1–Thr59. The H-T-H motif DNA-binding region spans Ile18–Lys37.

The protein belongs to the LysR transcriptional regulatory family.

Functionally, could be a positive regulator of bsdBCD expression in response to salicylic acid. This chain is HTH-type transcriptional regulator BsdA (bsdA), found in Bacillus subtilis (strain 168).